A 510-amino-acid chain; its full sequence is NAD(P)H-quinone oxidoreductase subunit 2, chloroplastic (510 aa).

12 helical membrane-spanning segments follow: residues 24–44, 59–79, 99–119, 124–144, 149–169, 184–204, 229–249, 295–315, 323–343, 354–374, 395–415, and 418–438; these read LLLF…GLIL, WFYF…FFRW, IFQF…VEYI, MAIT…MFLC, LITI…LSGY, LLMG…LYGL, ISIA…PAPF, WHLL…LIAL, MLAY…IVGD, YMLF…SFGL, ALSS…AGFF, and LYLF…IGLL.

Belongs to the complex I subunit 2 family. In terms of assembly, NDH is composed of at least 16 different subunits, 5 of which are encoded in the nucleus.

It is found in the plastid. The protein resides in the chloroplast thylakoid membrane. The enzyme catalyses a plastoquinone + NADH + (n+1) H(+)(in) = a plastoquinol + NAD(+) + n H(+)(out). The catalysed reaction is a plastoquinone + NADPH + (n+1) H(+)(in) = a plastoquinol + NADP(+) + n H(+)(out). In terms of biological role, NDH shuttles electrons from NAD(P)H:plastoquinone, via FMN and iron-sulfur (Fe-S) centers, to quinones in the photosynthetic chain and possibly in a chloroplast respiratory chain. The immediate electron acceptor for the enzyme in this species is believed to be plastoquinone. Couples the redox reaction to proton translocation, and thus conserves the redox energy in a proton gradient. The chain is NAD(P)H-quinone oxidoreductase subunit 2, chloroplastic from Coelogyne cristata (Orchid).